Consider the following 346-residue polypeptide: Phosphoribosylformylglycinamidine cyclo-ligase (346 aa).

Belongs to the AIR synthase family.

The protein resides in the cytoplasm. It carries out the reaction 2-formamido-N(1)-(5-O-phospho-beta-D-ribosyl)acetamidine + ATP = 5-amino-1-(5-phospho-beta-D-ribosyl)imidazole + ADP + phosphate + H(+). It functions in the pathway purine metabolism; IMP biosynthesis via de novo pathway; 5-amino-1-(5-phospho-D-ribosyl)imidazole from N(2)-formyl-N(1)-(5-phospho-D-ribosyl)glycinamide: step 2/2. In Erwinia tasmaniensis (strain DSM 17950 / CFBP 7177 / CIP 109463 / NCPPB 4357 / Et1/99), this protein is Phosphoribosylformylglycinamidine cyclo-ligase.